A 307-amino-acid chain; its full sequence is Ribonuclease Z (307 aa).

His-61, His-63, Asp-65, His-66, His-138, Asp-207, and His-265 together coordinate Zn(2+). The active-site Proton acceptor is Asp-65.

This sequence belongs to the RNase Z family. In terms of assembly, homodimer. Zn(2+) is required as a cofactor.

The catalysed reaction is Endonucleolytic cleavage of RNA, removing extra 3' nucleotides from tRNA precursor, generating 3' termini of tRNAs. A 3'-hydroxy group is left at the tRNA terminus and a 5'-phosphoryl group is left at the trailer molecule.. In terms of biological role, zinc phosphodiesterase, which displays some tRNA 3'-processing endonuclease activity. Probably involved in tRNA maturation, by removing a 3'-trailer from precursor tRNA. The chain is Ribonuclease Z from Methanothermobacter thermautotrophicus (strain ATCC 29096 / DSM 1053 / JCM 10044 / NBRC 100330 / Delta H) (Methanobacterium thermoautotrophicum).